Consider the following 743-residue polypeptide: MLNVVSKTIDLGDGRSIKIETGKLAKQADGAVTVTMGNTVLLATVCAAKDANPGCDFMPLQVEYKEKYSAIGRFPGGFTRREGKASDYEILTCRLVDRALRPLFPDNYHAEVFVNVILFSADGEDMPDALAGLAASAALAVSDIPFNGPISEVRVARVDGRYIVNPTFEQLERADIDLMVGATMDNIMMVEGEMDEVQESEMLEGIRVAHEAIKVQCKAQLELSEAVGKLQKREYSHEVNDEDLRKKVHDECYARAYEVATSGTGKHERGEAFEKIVEEFKAQYTEEELAEKAEMIARYYHDVEKEAMRRAILDEGKRLDGRKATEIRPIWIETDCLPGPHGSAIFTRGETQSLTTVTLGTKSDEKLVDDVLNYTKERFLLHYNFPPFSTGEARPQRGVGRREIGHGNLAHRALKRMIPTDYPYVVRVISDILESNGSSSMATVCAGTLALRDAGVQIRKPVSGIAMGLISENQGKNYAILSDILGDEDHLGDMDFKVTGTKDGITATQMDIKVDGLSYEILENALEQAKQGRLHILGKIMEAQPETRDDLKPHAPRIEKMHIGKEFIGAVIGPGGKIIQGIQEKSGATVNIEEVDGMGVIEISGTNKPCIDAAIGMIKGIVAMPEVGETYPGKITSVMPYGCFVEFLPGKEGLLHISEVDWKRFETIEDTNLKEGESINVKLLDIDPKTGKFKLSRKVLLEKPEGYVEPQPRERRERREGGREGGRNFERRGGDRDHREPRG.

Mg(2+) contacts are provided by Asp-489 and Asp-495. Residues 556–618 (PRIEKMHIGK…PCIDAAIGMI (63 aa)) enclose the KH domain. Positions 628–698 (GETYPGKITS…KTGKFKLSRK (71 aa)) constitute an S1 motif domain. The tract at residues 704–743 (PEGYVEPQPRERRERREGGREGGRNFERRGGDRDHREPRG) is disordered.

The protein belongs to the polyribonucleotide nucleotidyltransferase family. It depends on Mg(2+) as a cofactor.

It is found in the cytoplasm. The enzyme catalyses RNA(n+1) + phosphate = RNA(n) + a ribonucleoside 5'-diphosphate. Functionally, involved in mRNA degradation. Catalyzes the phosphorolysis of single-stranded polyribonucleotides processively in the 3'- to 5'-direction. This is Polyribonucleotide nucleotidyltransferase from Porphyromonas gingivalis (strain ATCC 33277 / DSM 20709 / CIP 103683 / JCM 12257 / NCTC 11834 / 2561).